A 138-amino-acid polypeptide reads, in one-letter code: Basic phospholipase A2 homolog TM-N49 (138 aa).

Residues 1-16 form the signal peptide; sequence MRTLWIMAVLLLGVEG. 7 disulfide bridges follow: C42/C131, C44/C60, C59/C111, C65/C138, C66/C104, C73/C97, and C91/C102.

Belongs to the phospholipase A2 family. Group II subfamily. N49 sub-subfamily. As to quaternary structure, homodimer; non-covalently linked. In terms of tissue distribution, expressed by the venom gland.

The protein resides in the secreted. Its function is as follows. Snake venom phospholipase A2 (PLA2) that exhibits potent myotoxic activity causing inflammatory cell infiltration, severe myoedema, myonecrosis and myolysis in the gastrocnemius muscles of BALB/c mice. The protein is Basic phospholipase A2 homolog TM-N49 of Protobothrops mucrosquamatus (Taiwan habu).